The following is a 189-amino-acid chain: Cancer/testis antigen family 45 member A2 (189 aa).

The protein belongs to the CT45 family. Testis specific. Expressed in cancer cell lines.

In Homo sapiens (Human), this protein is Cancer/testis antigen family 45 member A2.